The chain runs to 554 residues: Solute carrier family 22 member 1 (554 aa).

The Cytoplasmic segment spans residues 1 to 24 (MPSVDDVLEQVGEFGWFQKQAFLN). The helical transmembrane segment at 25 to 45 (LCLTSVAFAPIYVGIVFLGFT) threads the bilayer. The Extracellular segment spans residues 46–234 (PDHRCRSPGV…EFVGLGYRKT (189 aa)). The N-linked (GlcNAc...) asparagine glycan is linked to asparagine 71. A helical membrane pass occupies residues 235–255 (VAILYQTAFSVGLVLLSGLAY). The Cytoplasmic portion of the chain corresponds to 256–261 (AVPHWR). The helical transmembrane segment at 262-282 (SLQLAVSLPIFLLLLCYWFVP) threads the bilayer. Residues 282–286 (PESPR) carry the Proline-rich sequence motif. Residues 283–347 (ESPRWLLSQK…FRTQNLRKYT (65 aa)) are Extracellular-facing. Serine 333 bears the Phosphoserine mark. Residues 348 to 368 (FILMYLWFTSSVLYQGLIMHV) traverse the membrane as a helical segment. At 369–376 (GATGGSLY) the chain is on the cytoplasmic side. Residues 377 to 397 (LDFLYSALVEFPAAFVILLII) traverse the membrane as a helical segment. Residues 398–402 (DRFGR) are Extracellular-facing. Residues 403-423 (LYLLAGSNLLAGAACFFMIFI) form a helical membrane-spanning segment. Over 424-431 (SHDLHWLS) the chain is Cytoplasmic. A helical membrane pass occupies residues 432–452 (IVAACIGRMGITIVFQMVCLV). The Extracellular segment spans residues 453-464 (SAELYPTFIRNL). The chain crosses the membrane as a helical span at residues 465-485 (GVMVCSSLCDLGGVVAPFLVF). Residues 486–492 (RLTEVWR) are Cytoplasmic-facing. A helical membrane pass occupies residues 493 to 513 (GLPLVLFAALGLVAGGMSLLL). Residues 514 to 554 (PETKGVALPETIEEVERLGRKAKPRDNMIYLQVKMPEPAGL) lie on the Extracellular side of the membrane.

It belongs to the major facilitator (TC 2.A.1) superfamily. Organic cation transporter (TC 2.A.1.19) family. Phosphorylated.

It is found in the basolateral cell membrane. The protein resides in the apical cell membrane. Its subcellular location is the lateral cell membrane. It localises to the basal cell membrane. The protein localises to the cell membrane. The enzyme catalyses 1-methylnicotinamide(out) = 1-methylnicotinamide(in). It catalyses the reaction dopamine(out) = dopamine(in). It carries out the reaction serotonin(out) = serotonin(in). The catalysed reaction is (R)-adrenaline(out) = (R)-adrenaline(in). The enzyme catalyses (R)-noradrenaline(out) = (R)-noradrenaline(in). It catalyses the reaction histamine(out) = histamine(in). It carries out the reaction guanidine(out) = guanidine(in). The catalysed reaction is choline(out) = choline(in). The enzyme catalyses acetylcholine(in) = acetylcholine(out). It catalyses the reaction thiamine(in) = thiamine(out). It carries out the reaction spermidine(in) = spermidine(out). The catalysed reaction is agmatine(out) = agmatine(in). The enzyme catalyses putrescine(out) = putrescine(in). It catalyses the reaction (R)-carnitine(in) = (R)-carnitine(out). It carries out the reaction O-isobutanoyl-(R)-carnitine(in) = O-isobutanoyl-(R)-carnitine(out). The catalysed reaction is O-acetyl-(R)-carnitine(in) = O-acetyl-(R)-carnitine(out). The enzyme catalyses O-3-hydroxybutanoyl-(R)-carnitine(in) = O-3-hydroxybutanoyl-(R)-carnitine(out). It catalyses the reaction O-propanoyl-(R)-carnitine(in) = O-propanoyl-(R)-carnitine(out). It carries out the reaction O-butanoyl-(R)-carnitine(in) = O-butanoyl-(R)-carnitine(out). The catalysed reaction is O-2-methylbutanoyl-(R)-carnitine(in) = O-2-methylbutanoyl-(R)-carnitine(out). The enzyme catalyses O-3-methylbutanoyl-(R)-carnitine(in) = O-3-methylbutanoyl-(R)-carnitine(out). It catalyses the reaction O-hexanoyl-(R)-carnitine(in) = O-hexanoyl-(R)-carnitine(out). It carries out the reaction L-histidyl-L-proline diketopiperazine(in) = L-histidyl-L-proline diketopiperazine(out). The catalysed reaction is (R)-salsolinol(in) = (R)-salsolinol(out). The enzyme catalyses prostaglandin F2alpha(out) = prostaglandin F2alpha(in). It catalyses the reaction prostaglandin E2(out) = prostaglandin E2(in). With respect to regulation, phosphorylation of the transporter leads to changes in its substrate affinity, resulting in a regulation of the transport activity. In contrast with rat ortholog, ASP uptake is inhibited by protein kinase A (PKA) and C (PKC) activation. ASP uptake is also endogenously activated by calmodulin, the calmodulin-dependent kinase II and LCK tyrosine kinase. Inhibited by cGMP, most likely through a cGMP-binding protein that interacts with OCT1. Functionally, electrogenic voltage-dependent transporter that mediates the transport of a variety of organic cations such as endogenous bioactive amines, cationic drugs and xenobiotics. Functions as a pH- and Na(+)-independent, bidirectional transporter. Cation cellular uptake or release is driven by the electrochemical potential (i.e. membrane potential and concentration gradient) and substrate selectivity. Hydrophobicity is a major requirement for recognition in polyvalent substrates and inhibitors. Primarily expressed in the basolateral membrane of hepatocytes and proximal tubules and involved in the uptake and disposition of cationic compounds from the blood by hepatic and renal clearance. Most likely functions as an uptake carrier in enterocytes contributing to the intestinal elimination of organic cations from the systemic circulation. Transports endogenous monoamines such as N-1-methylnicotinamide (NMN), guanidine, neurotransmitters dopamine, serotonin, noradrenaline, adrenaline and histamine, and quaternary ammonium compound such as choline. Also transports natural polyamines such as spermidine, agmatine and putrescine at low affinity, but relatively high turnover. Involved in the hepatic and intestinal uptake of the vitamin B1/thiamine, hence regulating hepatic lipid and energy metabolism. Contributes to the influx and efflux of fatty acid carriers carnitines and acylcarnitines across the basolateral membrane of hepatocytes, from the liver to the systemic circulation and inversely and may be involved in regulating the systemic availability of hepatic acylcarnitines. Also capable of transporting non-amine endogenous compounds such as prostaglandin E2 (PGE2) and prostaglandin F2-alpha (PGF2-alpha). May contribute to the transport of cationic compounds in testes across the blood-testis-barrier. Also mediates the uptake of xenobiotics tributylmethylammonium (TBuMA), quinidine, N-methyl-quinine (NMQ), N-methyl-quinidine (NMQD) N-(4,4-azo-n-pentyl)-quinuclidine (APQ), azidoprocainamide methoiodide (AMP), N-(4,4-azo-n-pentyl)-21-deoxyajmalinium (APDA) and 4-(4-(dimethylamino)styryl)-N-methylpyridinium (ASP). In Sus scrofa (Pig), this protein is Solute carrier family 22 member 1 (SLC22A1).